Reading from the N-terminus, the 848-residue chain is Aryl hydrocarbon receptor (848 aa).

Positions 1–9 (MSSGANITY) are excised as a propeptide. The interval 1–38 (MSSGANITYASRKRRKPVQKTVKPIPAEGIKSNPSKRH) is disordered. 2 short sequence motifs (nuclear localization signal) span residues 12-15 (RKRR) and 36-41 (KRHRDR). The bHLH domain maps to 26-79 (PAEGIKSNPSKRHRDRLNTELDRLASLLPFPQDVINKLDKLSVLRLSVSYLRAK). Residues 37-65 (RHRDRLNTELDRLASLLPFPQDVINKLDK) form a DNA-binding region. 3 required for maintaining the overall integrity of the AHR:ARNT heterodimer and its transcriptional activity regions span residues 49–81 (LASL…AKSF), 116–124 (LLQALNGFV), and 260–262 (FAI). Positions 63–71 (LDKLSVLRL) match the Nuclear export signal motif. The 65-residue stretch at 111 to 175 (QEGEFLLQAL…AEFQRQLHWA (65 aa)) folds into the PAS 1 domain. Residues 266 to 336 (LQPPSILEIR…CAESHIRMIK (71 aa)) enclose the PAS 2 domain. The PAC domain occupies 342–383 (MTVFRLLAKHSRWRWVQSNARLIYRNGRPDYIIVTQRPLTDE). The tract at residues 421-449 (LPIRTKSNTSRKDWAPQSTPSKDSFHPSS) is disordered. Residues 436-449 (PQSTPSKDSFHPSS) are compositionally biased toward polar residues.

Homodimer. Heterodimer; efficient DNA binding requires dimerization with another bHLH protein. Interacts with ARNT; the heterodimer ARNT:AHR binds to core DNA sequence 5'-TGCGTG-3' within the dioxin response element (DRE) of target gene promoters and activates their transcription. Binds MYBBP1A. Interacts with coactivators including SRC-1, RIP140 and NOCA7, and with the corepressor SMRT. Interacts with NEDD8 and IVNS1ABP. Interacts with BMAL1. Interacts with HSP90AB1. Interacts with TIPARP; leading to mono-ADP-ribosylation of AHR and subsequent inhibition of AHR. Post-translationally, mono-ADP-ribosylated, leading to inhibit transcription activator activity of AHR.

It localises to the cytoplasm. The protein localises to the nucleus. Functionally, ligand-activated transcription factor that enables cells to adapt to changing conditions by sensing compounds from the environment, diet, microbiome and cellular metabolism, and which plays important roles in development, immunity and cancer. Upon ligand binding, translocates into the nucleus, where it heterodimerizes with ARNT and induces transcription by binding to xenobiotic response elements (XRE). Regulates a variety of biological processes, including angiogenesis, hematopoiesis, drug and lipid metabolism, cell motility and immune modulation. Xenobiotics can act as ligands: upon xenobiotic-binding, activates the expression of multiple phase I and II xenobiotic chemical metabolizing enzyme genes (such as the CYP1A1 gene). Mediates biochemical and toxic effects of halogenated aromatic hydrocarbons. Next to xenobiotics, natural ligands derived from plants, microbiota, and endogenous metabolism are potent AHR agonists. Tryptophan (Trp) derivatives constitute an important class of endogenous AHR ligands. Acts as a negative regulator of anti-tumor immunity: indoles and kynurenic acid generated by Trp catabolism act as ligand and activate AHR, thereby promoting AHR-driven cancer cell motility and suppressing adaptive immunity. Regulates the circadian clock by inhibiting the basal and circadian expression of the core circadian component PER1. Inhibits PER1 by repressing the CLOCK-BMAL1 heterodimer mediated transcriptional activation of PER1. The heterodimer ARNT:AHR binds to core DNA sequence 5'-TGCGTG-3' within the dioxin response element (DRE) of target gene promoters and activates their transcription. The sequence is that of Aryl hydrocarbon receptor (Ahr) from Mus musculus castaneus (Southeastern Asian house mouse).